Here is a 348-residue protein sequence, read N- to C-terminus: S-adenosylmethionine:tRNA ribosyltransferase-isomerase (348 aa).

Belongs to the QueA family. Monomer.

The protein localises to the cytoplasm. The catalysed reaction is 7-aminomethyl-7-carbaguanosine(34) in tRNA + S-adenosyl-L-methionine = epoxyqueuosine(34) in tRNA + adenine + L-methionine + 2 H(+). Its pathway is tRNA modification; tRNA-queuosine biosynthesis. Functionally, transfers and isomerizes the ribose moiety from AdoMet to the 7-aminomethyl group of 7-deazaguanine (preQ1-tRNA) to give epoxyqueuosine (oQ-tRNA). The sequence is that of S-adenosylmethionine:tRNA ribosyltransferase-isomerase from Amoebophilus asiaticus (strain 5a2).